A 544-amino-acid polypeptide reads, in one-letter code: Exodeoxyribonuclease 7 large subunit (544 aa).

Residues 522-544 are disordered; that stretch reads PETPPKSRKADNPPEPPEQTSFL.

The protein belongs to the XseA family. As to quaternary structure, heterooligomer composed of large and small subunits.

The protein resides in the cytoplasm. It carries out the reaction Exonucleolytic cleavage in either 5'- to 3'- or 3'- to 5'-direction to yield nucleoside 5'-phosphates.. In terms of biological role, bidirectionally degrades single-stranded DNA into large acid-insoluble oligonucleotides, which are then degraded further into small acid-soluble oligonucleotides. The sequence is that of Exodeoxyribonuclease 7 large subunit from Zymomonas mobilis subsp. mobilis (strain ATCC 31821 / ZM4 / CP4).